We begin with the raw amino-acid sequence, 368 residues long: Quinolinate synthase (368 aa).

2 residues coordinate iminosuccinate: histidine 46 and serine 63. A [4Fe-4S] cluster-binding site is contributed by cysteine 110. Iminosuccinate is bound by residues 141–143 and serine 162; that span reads YVN. Cysteine 230 serves as a coordination point for [4Fe-4S] cluster. Iminosuccinate contacts are provided by residues 256-258 and threonine 273; that span reads HPE. Residue cysteine 320 participates in [4Fe-4S] cluster binding.

This sequence belongs to the quinolinate synthase family. Type 3 subfamily. It depends on [4Fe-4S] cluster as a cofactor.

It localises to the cytoplasm. It catalyses the reaction iminosuccinate + dihydroxyacetone phosphate = quinolinate + phosphate + 2 H2O + H(+). The protein operates within cofactor biosynthesis; NAD(+) biosynthesis; quinolinate from iminoaspartate: step 1/1. Functionally, catalyzes the condensation of iminoaspartate with dihydroxyacetone phosphate to form quinolinate. In Bacillus thuringiensis subsp. konkukian (strain 97-27), this protein is Quinolinate synthase.